We begin with the raw amino-acid sequence, 161 residues long: Protein ilm1 (161 aa).

At 1–6 (MLFSFR) the chain is on the cytoplasmic side. The helical transmembrane segment at 7–27 (AIVLFYCCMLTFAGIGFLWNP) threads the bilayer. Residues 28–56 (KFVVESGLVALIGASMEVKPLIVTQDNLS) lie on the Lumenal side of the membrane. Residues 57-77 (TLALSGLVFLILGMIYTISLL) traverse the membrane as a helical segment. At 78–81 (QSNF) the chain is on the cytoplasmic side. A helical transmembrane segment spans residues 82-102 (LFFSGITPIRAIFDFILTGFI). Over 103–112 (YLKKEHIASN) the chain is Lumenal. A helical transmembrane segment spans residues 113 to 133 (SLTFTFAFCDLMWQFWMFAAM). At 134–161 (SEERAKYLKNQKKAEELAARKAREVEES) the chain is on the cytoplasmic side.

The protein belongs to the ILM1 family.

The protein resides in the endoplasmic reticulum. It is found in the membrane. This chain is Protein ilm1, found in Schizosaccharomyces pombe (strain 972 / ATCC 24843) (Fission yeast).